The primary structure comprises 181 residues: GTPase RhebL1 (181 aa).

Residues 30 to 36 (LEDYDPT), Gly-61, 117 to 120 (NKAD), and 147 to 148 (SA) contribute to the GTP site. Residues 33-41 (YDPTVENTY) carry the Effector region motif. Thr-36 contributes to the Mg(2+) binding site. Cys-178 is modified (cysteine methyl ester). The S-farnesyl cysteine moiety is linked to residue Cys-178. The propeptide at 179 to 181 (HLM) is removed in mature form.

Belongs to the small GTPase superfamily. Rheb family. As to quaternary structure, interacts with MTOR.

The protein localises to the endomembrane system. It localises to the cytoplasm. The catalysed reaction is GTP + H2O = GDP + phosphate + H(+). Its function is as follows. Binds GTP and exhibits intrinsic GTPase activity. May activate NF-kappa-B-mediated gene transcription. Promotes signal transduction through MTOR, activates RPS6KB1, and is a downstream target of the small GTPase-activating proteins TSC1 and TSC2. The sequence is that of GTPase RhebL1 (RHEBL1) from Bos taurus (Bovine).